The primary structure comprises 425 residues: E3 ubiquitin-protein ligase GW2 (425 aa).

The segment at cysteine 62–lysine 105 adopts an RING-type; degenerate zinc-finger fold.

Expressed in roots, shoots, leaves, inflorescence meristems, stamens, pistils, spikelet hulls and endosperms 4 days after fertilization.

The protein resides in the cytoplasm. It carries out the reaction S-ubiquitinyl-[E2 ubiquitin-conjugating enzyme]-L-cysteine + [acceptor protein]-L-lysine = [E2 ubiquitin-conjugating enzyme]-L-cysteine + N(6)-ubiquitinyl-[acceptor protein]-L-lysine.. It participates in protein modification; protein ubiquitination. E3 ubiquitin-protein ligase involved in the regulation of grain size. May limit grain width and weight by restricting cell proliferation of the spikelet hull. Possesses E3 ubiquitin-protein ligase activity in vitro. The chain is E3 ubiquitin-protein ligase GW2 from Oryza sativa subsp. indica (Rice).